Consider the following 216-residue polypeptide: Small ribosomal subunit protein uS3c (216 aa).

Positions 43-116 (IKNYVQKNMR…RLNIAITRVA (74 aa)) constitute a KH type-2 domain.

This sequence belongs to the universal ribosomal protein uS3 family. Part of the 30S ribosomal subunit.

It localises to the plastid. The protein localises to the chloroplast. The polypeptide is Small ribosomal subunit protein uS3c (rps3) (Drimys granadensis).